The primary structure comprises 537 residues: Prolyl 4-hydroxylase subunit alpha-2 (537 aa).

Positions 1 to 23 (MKLQVLVLVLLMSWFGVLSWVQA) are cleaved as a signal peptide. An N-linked (GlcNAc...) asparagine glycan is attached at N117. One copy of the TPR repeat lies at 209-242 (SLVLDYLSYAVFQLGDLHRAVELTRRLLSLDPSH). N-linked (GlcNAc...) asparagine glycosylation is present at N266. One can recognise a Fe2OG dioxygenase domain in the interval 414 to 522 (TAELLQVANY…KWVSNKWFHE (109 aa)). The Fe cation site is built by H432 and D434. N6-succinyllysine is present on K482. H503 serves as a coordination point for Fe cation. K513 provides a ligand contact to 2-oxoglutarate.

This sequence belongs to the P4HA family. As to quaternary structure, heterotetramer of two alpha-2 chains and two beta chains (P4HB) (the beta chain is the multi-functional PDI), where P4HB plays the role of a structural subunit; this tetramer catalyzes the formation of 4-hydroxyproline in collagen. Fe(2+) serves as cofactor. Requires L-ascorbate as cofactor. As to expression, expressed at least in brain, heart and lung.

Its subcellular location is the endoplasmic reticulum lumen. It catalyses the reaction L-prolyl-[collagen] + 2-oxoglutarate + O2 = trans-4-hydroxy-L-prolyl-[collagen] + succinate + CO2. With respect to regulation, inhibited by poly(L-proline) only at very high concentrations. Catalyzes the post-translational formation of 4-hydroxyproline in -Xaa-Pro-Gly- sequences in collagens and other proteins. The chain is Prolyl 4-hydroxylase subunit alpha-2 (P4ha2) from Mus musculus (Mouse).